Consider the following 106-residue polypeptide: Ferredoxin-2 (106 aa).

4Fe-4S ferredoxin-type domains lie at 2–29 (YVVT…YEGE) and 30–59 (NFLV…GKWL). 2 residues coordinate [3Fe-4S] cluster: cysteine 8 and cysteine 16. [4Fe-4S] cluster-binding residues include cysteine 20, cysteine 39, cysteine 42, and cysteine 45. Cysteine 49 serves as a coordination point for [3Fe-4S] cluster. The tract at residues 80–106 (ADADDWKDKPDKTGLLSENPGKGTVCH) is disordered.

Requires [4Fe-4S] cluster as cofactor. It depends on [3Fe-4S] cluster as a cofactor.

Functionally, ferredoxins are iron-sulfur proteins that transfer electrons in a wide variety of metabolic reactions. This is Ferredoxin-2 from Rhodospirillum rubrum.